The following is a 458-amino-acid chain: NADH-ubiquinone oxidoreductase chain 4 (458 aa).

Helical transmembrane passes span 21–43, 58–78, 93–112, 116–138, 145–165, 196–216, 224–244, 257–277, 285–305, 309–329, 341–361, and 379–399; these read ASLWTNTTTYSLLIATISLQWLN, IDQISAPLLVLSCWLLPLMLL, RTFIVTLTTIQPFIILAFSA, TLFYISFEATLIPTLILITRWGN, AGIYLLFYTLISSLPLLVTIL, GLALLMAFMVKAPLYGLHLWL, PIAGSMLLAALLLKLGGYGIM, LSYPFLALALWGALMTSSICL, LIAYSSVSHMGLVIAASMIQT, FSGAMILMISHGLTSSMLFCL, ILLLTRGLQPLLPLMSVWWLL, and LTIMIALFNWSTPTIILTGLA.

It belongs to the complex I subunit 4 family.

The protein resides in the mitochondrion membrane. The enzyme catalyses a ubiquinone + NADH + 5 H(+)(in) = a ubiquinol + NAD(+) + 4 H(+)(out). Core subunit of the mitochondrial membrane respiratory chain NADH dehydrogenase (Complex I) that is believed to belong to the minimal assembly required for catalysis. Complex I functions in the transfer of electrons from NADH to the respiratory chain. The immediate electron acceptor for the enzyme is believed to be ubiquinone. This is NADH-ubiquinone oxidoreductase chain 4 (MT-ND4) from Struthio camelus (Common ostrich).